Here is an 81-residue protein sequence, read N- to C-terminus: Large ribosomal subunit protein bL31B (81 aa).

It belongs to the bacterial ribosomal protein bL31 family. Type B subfamily. Part of the 50S ribosomal subunit.

The protein is Large ribosomal subunit protein bL31B of Bdellovibrio bacteriovorus (strain ATCC 15356 / DSM 50701 / NCIMB 9529 / HD100).